The following is a 658-amino-acid chain: Protein kinase and PP2C-like domain-containing protein (658 aa).

In terms of domain architecture, Protein kinase spans 30 to 314 (FTLLSPIAKG…DNVVLELESI (285 aa)). ATP-binding positions include 36–44 (IAKGSESVV) and K57. Catalysis depends on D149, which acts as the Proton acceptor. Residues 392–648 (SCGSFATCGR…DNITVIVVFL (257 aa)) form the PPM-type phosphatase domain. D428, G429, D599, and D639 together coordinate Mn(2+).

In the N-terminal section; belongs to the protein kinase superfamily. Ser/Thr protein kinase family. This sequence in the C-terminal section; belongs to the PP2C family. Mg(2+) serves as cofactor. The cofactor is Mn(2+).

The enzyme catalyses L-seryl-[protein] + ATP = O-phospho-L-seryl-[protein] + ADP + H(+). The catalysed reaction is L-threonyl-[protein] + ATP = O-phospho-L-threonyl-[protein] + ADP + H(+). It catalyses the reaction O-phospho-L-seryl-[protein] + H2O = L-seryl-[protein] + phosphate. It carries out the reaction O-phospho-L-threonyl-[protein] + H2O = L-threonyl-[protein] + phosphate. The chain is Protein kinase and PP2C-like domain-containing protein from Arabidopsis thaliana (Mouse-ear cress).